Reading from the N-terminus, the 84-residue chain is Sulfur carrier protein TusA (84 aa).

The Cysteine persulfide intermediate role is filled by C21.

It belongs to the sulfur carrier protein TusA family.

Its subcellular location is the cytoplasm. Its function is as follows. Sulfur carrier protein which probably makes part of a sulfur-relay system. This Pseudomonas savastanoi pv. phaseolicola (strain 1448A / Race 6) (Pseudomonas syringae pv. phaseolicola (strain 1448A / Race 6)) protein is Sulfur carrier protein TusA.